Consider the following 641-residue polypeptide: MTTLSTIWLFLITITAIFQLGLSSNVTTIIDDDNNNNNNNNNNADDFLEPQIETIKVIGNKFFECESGHQFFIKGIAYQKTRQEGEIYDTTKEPHYIDPLANPFTCLRDLDYLKELGINLVRVYQIHPNANHDVCMNAFAEAGIYVLADLSEPTISIRRDYPHWDTEIFNRYQQVIDSMSNYKNLLGFFAGNEVTNCQSNIDASPFVRAAIRDCKKYINQQGYRKIPIGYASNDDANIRKNLANYFVCQLDEDEDKGQEHLNSQADFFAINVYEWCGYSTYTTSGYRDLTTMFKDYSVPVFFSEFGCNIITPRPFTEVEAIYGSTMKKVWSGGIAYEYFEEVNHYGILLTKKDGSITKLPDFDTLKMRFHAATPIGITMDEATICEPPICSNSVIDDKSSSSSSSSSFWDVALTLPPTPNEAKCECLWQSLSCVVSEDATFDEEVALRELCFKVDCEDINANGRSGKYGRYSDCNPTVRTSYALNKYYEQCGKKQEICDFQGRGELLPNRNGGLQDLENKFSSDGQNCLSLLEGKEEEKEVQEEEPDVPGLPGSNKGKEVESTPKRKGKGKSKEKEKGKLIEEEEEEEEEEEENNKTPSSGEKSPKTSKSIAGGNAITFKNDSIWKTFIEILFTCSAAILI.

The first 23 residues, 1–23 (MTTLSTIWLFLITITAIFQLGLS), serve as a signal peptide directing secretion. Residue asparagine 25 is glycosylated (N-linked (GlcNAc...) asparagine). A disulfide bridge links cysteine 106 with cysteine 135. Residues tyrosine 124, asparagine 192, glutamate 193, aspartate 234, and arginine 239 each contribute to the (1,3-beta-D-glucosyl)n site. The Proton donor role is filled by glutamate 193. 6 cysteine pairs are disulfide-bonded: cysteine 248/cysteine 390, cysteine 276/cysteine 307, cysteine 424/cysteine 474, cysteine 426/cysteine 528, cysteine 433/cysteine 498, and cysteine 451/cysteine 456. Glutamate 304 serves as the catalytic Nucleophile. (1,3-beta-D-glucosyl)n is bound at residue tyrosine 336. The tract at residues 535–613 (KEEEKEVQEE…SPKTSKSIAG (79 aa)) is disordered. Positions 571 to 581 (KSKEKEKGKLI) are enriched in basic and acidic residues. Acidic residues predominate over residues 582–593 (EEEEEEEEEEEE). Residues 596–610 (KTPSSGEKSPKTSKS) show a composition bias toward polar residues. Asparagine 621 carries N-linked (GlcNAc...) asparagine glycosylation. Residue aspartate 622 is the site of GPI-anchor amidated aspartate attachment. A propeptide spans 623-641 (SIWKTFIEILFTCSAAILI) (removed in mature form).

Belongs to the glycosyl hydrolase 72 family.

It is found in the cell membrane. Functionally, splits internally a 1,3-beta-glucan molecule and transfers the newly generated reducing end (the donor) to the non-reducing end of another 1,3-beta-glucan molecule (the acceptor) forming a 1,3-beta linkage, resulting in the elongation of 1,3-beta-glucan chains in the cell wall. Involved in spore wall assembly. The chain is 1,3-beta-glucanosyltransferase PGA5 (PGA5) from Candida albicans (strain SC5314 / ATCC MYA-2876) (Yeast).